Consider the following 417-residue polypeptide: Serine hydroxymethyltransferase (417 aa).

Residues Leu112 and Gly116 to Leu118 contribute to the (6S)-5,6,7,8-tetrahydrofolate site. At Lys221 the chain carries N6-(pyridoxal phosphate)lysine. Glu247 is a binding site for (6S)-5,6,7,8-tetrahydrofolate.

This sequence belongs to the SHMT family. In terms of assembly, homodimer. The cofactor is pyridoxal 5'-phosphate.

It is found in the cytoplasm. It catalyses the reaction (6R)-5,10-methylene-5,6,7,8-tetrahydrofolate + glycine + H2O = (6S)-5,6,7,8-tetrahydrofolate + L-serine. It participates in one-carbon metabolism; tetrahydrofolate interconversion. The protein operates within amino-acid biosynthesis; glycine biosynthesis; glycine from L-serine: step 1/1. Catalyzes the reversible interconversion of serine and glycine with tetrahydrofolate (THF) serving as the one-carbon carrier. This reaction serves as the major source of one-carbon groups required for the biosynthesis of purines, thymidylate, methionine, and other important biomolecules. Also exhibits THF-independent aldolase activity toward beta-hydroxyamino acids, producing glycine and aldehydes, via a retro-aldol mechanism. The sequence is that of Serine hydroxymethyltransferase from Borrelia garinii subsp. bavariensis (strain ATCC BAA-2496 / DSM 23469 / PBi) (Borreliella bavariensis).